Consider the following 340-residue polypeptide: MSVIQKNWQELIKPNKLMIELVGGSKKVATVVAEPLERGFGLTLGNALRRVLLSSLQGAAVTAIQIEGVLHEFSSIPGVREDVTDVILNIKGLALLMHSEGPRRMTLKASGPGEVTAAQIEMGSDIEIMNPDLVICHLDEGATLSMEFTVGMGKGYVPSTQNRPEDAPIGYIPIDSIFSPVTKVSYRVENSRVGQVTDYDKLSMVVETDGSVGPEDAVALAARILQDQLQLFINFEEPQAVSEEKKDDELPFNKNLLRKVDELELSVRSANCLKNDNIIYIGDLVQKTEAEMLRTPNFGRKSLNEIKEVLAQMGLHLGMEISNWPPENIEDLAKKLEEPY.

Positions 1 to 236 (MSVIQKNWQE…DQLQLFINFE (236 aa)) are alpha N-terminal domain (alpha-NTD). The alpha C-terminal domain (alpha-CTD) stretch occupies residues 252–340 (FNKNLLRKVD…DLAKKLEEPY (89 aa)).

Belongs to the RNA polymerase alpha chain family. Homodimer. The RNAP catalytic core consists of 2 alpha, 1 beta, 1 beta' and 1 omega subunit. When a sigma factor is associated with the core the holoenzyme is formed, which can initiate transcription.

The catalysed reaction is RNA(n) + a ribonucleoside 5'-triphosphate = RNA(n+1) + diphosphate. DNA-dependent RNA polymerase catalyzes the transcription of DNA into RNA using the four ribonucleoside triphosphates as substrates. The sequence is that of DNA-directed RNA polymerase subunit alpha from Rhodospirillum rubrum (strain ATCC 11170 / ATH 1.1.1 / DSM 467 / LMG 4362 / NCIMB 8255 / S1).